The sequence spans 116 residues: Ribosome-binding factor A (116 aa).

Belongs to the RbfA family. Monomer. Binds 30S ribosomal subunits, but not 50S ribosomal subunits or 70S ribosomes.

Its subcellular location is the cytoplasm. Functionally, one of several proteins that assist in the late maturation steps of the functional core of the 30S ribosomal subunit. Associates with free 30S ribosomal subunits (but not with 30S subunits that are part of 70S ribosomes or polysomes). Required for efficient processing of 16S rRNA. May interact with the 5'-terminal helix region of 16S rRNA. This chain is Ribosome-binding factor A, found in Streptococcus sanguinis (strain SK36).